The primary structure comprises 298 residues: Ribose-phosphate pyrophosphokinase (298 aa).

ATP contacts are provided by residues 33–35 and 91–92; these read DGE and RQ. Positions 125 and 164 each coordinate Mg(2+). The active site involves Lys187. Positions 189 and 224 each coordinate D-ribose 5-phosphate.

The protein belongs to the ribose-phosphate pyrophosphokinase family. Class III (archaeal) subfamily. Mg(2+) serves as cofactor.

It localises to the cytoplasm. It carries out the reaction D-ribose 5-phosphate + ATP = 5-phospho-alpha-D-ribose 1-diphosphate + AMP + H(+). It functions in the pathway metabolic intermediate biosynthesis; 5-phospho-alpha-D-ribose 1-diphosphate biosynthesis; 5-phospho-alpha-D-ribose 1-diphosphate from D-ribose 5-phosphate (route I): step 1/1. Its function is as follows. Involved in the biosynthesis of the central metabolite phospho-alpha-D-ribosyl-1-pyrophosphate (PRPP) via the transfer of pyrophosphoryl group from ATP to 1-hydroxyl of ribose-5-phosphate (Rib-5-P). This Methanobrevibacter smithii (strain ATCC 35061 / DSM 861 / OCM 144 / PS) protein is Ribose-phosphate pyrophosphokinase.